The following is a 355-amino-acid chain: Histidine biosynthesis bifunctional protein HisB (355 aa).

The segment at 1–166 (MKQKILFIDR…DITKEIIKRN (166 aa)) is histidinol-phosphatase. Residue D9 is the Nucleophile of the active site. Positions 9 and 11 each coordinate Mg(2+). D11 functions as the Proton donor in the catalytic mechanism. C93, H95, C101, and C103 together coordinate Zn(2+). Mg(2+) is bound at residue D130. The segment at 167–355 (RYREVIRETK…NTLPTSKGIL (189 aa)) is imidazoleglycerol-phosphate dehydratase.

It in the N-terminal section; belongs to the histidinol-phosphatase family. This sequence in the C-terminal section; belongs to the imidazoleglycerol-phosphate dehydratase family. Mg(2+) is required as a cofactor. Requires Zn(2+) as cofactor.

It localises to the cytoplasm. It carries out the reaction D-erythro-1-(imidazol-4-yl)glycerol 3-phosphate = 3-(imidazol-4-yl)-2-oxopropyl phosphate + H2O. The catalysed reaction is L-histidinol phosphate + H2O = L-histidinol + phosphate. It functions in the pathway amino-acid biosynthesis; L-histidine biosynthesis; L-histidine from 5-phospho-alpha-D-ribose 1-diphosphate: step 6/9. The protein operates within amino-acid biosynthesis; L-histidine biosynthesis; L-histidine from 5-phospho-alpha-D-ribose 1-diphosphate: step 8/9. This Buchnera aphidicola subsp. Schizaphis graminum (strain Sg) protein is Histidine biosynthesis bifunctional protein HisB.